A 126-amino-acid chain; its full sequence is MMTPTIPVALFDRLLVEGISPHELVRRKLMCLFNSCAVPGGETLPPLLTRGMPEWHEVNVGDKRVLNWFCRELRAAILRYEPSINMLKVSVKDAHHQTLALSLEAMLQDESEPLRLEIAYSNGRWR.

Belongs to the GpW/Gp25 family. IraD subfamily. As to quaternary structure, interacts with RssB.

It localises to the cytoplasm. Functionally, inhibits RpoS proteolysis by regulating RssB activity, thereby increasing the stability of the sigma stress factor RpoS during oxidative stress. Its effect on RpoS stability is due to its interaction with RssB, which probably blocks the interaction of RssB with RpoS, and the consequent delivery of the RssB-RpoS complex to the ClpXP protein degradation pathway. In Salmonella enteritidis PT4 (strain P125109), this protein is Anti-adapter protein IraD.